A 239-amino-acid chain; its full sequence is Small ribosomal subunit protein uS3c (239 aa).

In terms of domain architecture, KH type-2 spans 43–139 (IKNYIQKNRK…RLNISIEKVK (97 aa)). Residues 50–80 (NRKKGSNRKIESDSSSEVITHNRKTDSGSSS) form a disordered region.

This sequence belongs to the universal ribosomal protein uS3 family. In terms of assembly, part of the 30S ribosomal subunit.

Its subcellular location is the plastid. It localises to the chloroplast. The protein is Small ribosomal subunit protein uS3c (rps3) of Agrostis stolonifera (Creeping bentgrass).